A 306-amino-acid chain; its full sequence is tRNA dimethylallyltransferase (306 aa).

Position 12 to 19 (12 to 19) interacts with ATP; that stretch reads GPTGVGKS. 14–19 is a binding site for substrate; sequence TGVGKS.

This sequence belongs to the IPP transferase family. In terms of assembly, monomer. It depends on Mg(2+) as a cofactor.

It carries out the reaction adenosine(37) in tRNA + dimethylallyl diphosphate = N(6)-dimethylallyladenosine(37) in tRNA + diphosphate. Catalyzes the transfer of a dimethylallyl group onto the adenine at position 37 in tRNAs that read codons beginning with uridine, leading to the formation of N6-(dimethylallyl)adenosine (i(6)A). The protein is tRNA dimethylallyltransferase of Desulfatibacillum aliphaticivorans.